A 40-amino-acid polypeptide reads, in one-letter code: Photosystem II reaction center protein J (40 aa).

The chain crosses the membrane as a helical span at residues 10-30; that stretch reads LWIIGTVTGILVIGLIGIFFF.

Belongs to the PsbJ family. In terms of assembly, PSII is composed of 1 copy each of membrane proteins PsbA, PsbB, PsbC, PsbD, PsbE, PsbF, PsbH, PsbI, PsbJ, PsbK, PsbL, PsbM, PsbT, PsbX, PsbY, PsbZ, Psb30/Ycf12, at least 3 peripheral proteins of the oxygen-evolving complex and a large number of cofactors. It forms dimeric complexes.

It is found in the plastid membrane. In terms of biological role, one of the components of the core complex of photosystem II (PSII). PSII is a light-driven water:plastoquinone oxidoreductase that uses light energy to abstract electrons from H(2)O, generating O(2) and a proton gradient subsequently used for ATP formation. It consists of a core antenna complex that captures photons, and an electron transfer chain that converts photonic excitation into a charge separation. This Cuscuta exaltata (Tall dodder) protein is Photosystem II reaction center protein J.